The sequence spans 546 residues: 2-isopropylmalate synthase (546 aa).

Residues 8-271 enclose the Pyruvate carboxyltransferase domain; the sequence is ILIFDTTLRD…NSFFGRSSDS (264 aa). Positions 17, 208, 210, and 244 each coordinate Mn(2+). The regulatory domain stretch occupies residues 408–546; that stretch reads QLSHVQVSCG…KNKVLSNPKK (139 aa).

The protein belongs to the alpha-IPM synthase/homocitrate synthase family. LeuA type 1 subfamily. Homodimer. It depends on Mn(2+) as a cofactor.

It is found in the cytoplasm. It carries out the reaction 3-methyl-2-oxobutanoate + acetyl-CoA + H2O = (2S)-2-isopropylmalate + CoA + H(+). The protein operates within amino-acid biosynthesis; L-leucine biosynthesis; L-leucine from 3-methyl-2-oxobutanoate: step 1/4. In terms of biological role, catalyzes the condensation of the acetyl group of acetyl-CoA with 3-methyl-2-oxobutanoate (2-ketoisovalerate) to form 3-carboxy-3-hydroxy-4-methylpentanoate (2-isopropylmalate). The protein is 2-isopropylmalate synthase of Prochlorococcus marinus subsp. pastoris (strain CCMP1986 / NIES-2087 / MED4).